The sequence spans 432 residues: 3-phosphoshikimate 1-carboxyvinyltransferase (432 aa).

3-phosphoshikimate contacts are provided by Lys23, Ser24, and Arg28. Residue Lys23 coordinates phosphoenolpyruvate. Phosphoenolpyruvate is bound by residues Gly95 and Arg123. 4 residues coordinate 3-phosphoshikimate: Ser167, Gln169, Asp316, and Lys343. Phosphoenolpyruvate is bound at residue Gln169. The active-site Proton acceptor is the Asp316. Residues Arg347 and Arg391 each coordinate phosphoenolpyruvate.

Belongs to the EPSP synthase family. Monomer.

Its subcellular location is the cytoplasm. It carries out the reaction 3-phosphoshikimate + phosphoenolpyruvate = 5-O-(1-carboxyvinyl)-3-phosphoshikimate + phosphate. Its pathway is metabolic intermediate biosynthesis; chorismate biosynthesis; chorismate from D-erythrose 4-phosphate and phosphoenolpyruvate: step 6/7. Catalyzes the transfer of the enolpyruvyl moiety of phosphoenolpyruvate (PEP) to the 5-hydroxyl of shikimate-3-phosphate (S3P) to produce enolpyruvyl shikimate-3-phosphate and inorganic phosphate. This chain is 3-phosphoshikimate 1-carboxyvinyltransferase, found in Limosilactobacillus fermentum (strain NBRC 3956 / LMG 18251) (Lactobacillus fermentum).